Reading from the N-terminus, the 160-residue chain is Crossover junction endodeoxyribonuclease RuvC (160 aa).

Residues Asp-9, Glu-68, and Asp-141 contribute to the active site. The Mg(2+) site is built by Asp-9, Glu-68, and Asp-141.

The protein belongs to the RuvC family. Homodimer which binds Holliday junction (HJ) DNA. The HJ becomes 2-fold symmetrical on binding to RuvC with unstacked arms; it has a different conformation from HJ DNA in complex with RuvA. In the full resolvosome a probable DNA-RuvA(4)-RuvB(12)-RuvC(2) complex forms which resolves the HJ. Mg(2+) is required as a cofactor.

Its subcellular location is the cytoplasm. It catalyses the reaction Endonucleolytic cleavage at a junction such as a reciprocal single-stranded crossover between two homologous DNA duplexes (Holliday junction).. Its function is as follows. The RuvA-RuvB-RuvC complex processes Holliday junction (HJ) DNA during genetic recombination and DNA repair. Endonuclease that resolves HJ intermediates. Cleaves cruciform DNA by making single-stranded nicks across the HJ at symmetrical positions within the homologous arms, yielding a 5'-phosphate and a 3'-hydroxyl group; requires a central core of homology in the junction. The consensus cleavage sequence is 5'-(A/T)TT(C/G)-3'. Cleavage occurs on the 3'-side of the TT dinucleotide at the point of strand exchange. HJ branch migration catalyzed by RuvA-RuvB allows RuvC to scan DNA until it finds its consensus sequence, where it cleaves and resolves the cruciform DNA. This is Crossover junction endodeoxyribonuclease RuvC from Campylobacter jejuni (strain RM1221).